We begin with the raw amino-acid sequence, 316 residues long: Na(+)/H(+) exchange regulatory cofactor NHE-RF2 (316 aa).

The region spanning 11–91 (LCRLVRGEQG…ETRLLVVDKE (81 aa)) is the PDZ 1 domain. Positions 109-148 (QRGLPPAHDPWEPKPDWARAGSLSSDAGQKDVNGPPRELR) are disordered. A phosphoserine mark is found at S130, S183, and S254. Residues 151–231 (LCHLRKGPQG…EARLLLVDPE (81 aa)) form the PDZ 2 domain. The disordered stretch occupies residues 244–303 (TEEHVEGPLPSPITNGTSPAQDASAWKRDPFQESGLHLSPTAAEAKEKARATRVNKRAPQ). The segment covering 255–264 (PITNGTSPAQ) has biased composition (polar residues). A Phosphoserine modification is found at S282.

Homodimer, and heterodimer with NHERF1. Binds ADRB2, SLC9A3, P2RY1, P2YR2, SRY, RDX, PDZK1 and LPAR2. Found in a complex with EZR, PODXL and NHERF2. Interacts (via the PDZ domains) with PODXL (via the C-terminal PDZ-binding motif DTHL); interaction is detected in glomerular epithelium cells. Binds PODXL. Interacts with SGK1 and KCNJ1/ROMK1. Interacts (via the PDZ domains) with SLC26A6. Detected in kidney glomeruli.

The protein resides in the endomembrane system. It localises to the nucleus. The protein localises to the apical cell membrane. In terms of biological role, scaffold protein that connects plasma membrane proteins with members of the ezrin/moesin/radixin family and thereby helps to link them to the actin cytoskeleton and to regulate their surface expression. Necessary for cAMP-mediated phosphorylation and inhibition of SLC9A3. May also act as scaffold protein in the nucleus. This Oryctolagus cuniculus (Rabbit) protein is Na(+)/H(+) exchange regulatory cofactor NHE-RF2 (NHERF2).